Here is a 186-residue protein sequence, read N- to C-terminus: DNA damage up-regulated protein (186 aa).

A disordered region spans residues 147 to 166 (ATENGEGCRPARDPASSPSS).

Interacts with DNA damage response proteins ATR, H2AX, PCNA, RAD18 and RAD51C. Forms a complex with H2AX and RAD18 following DDUP phosphorylation. In terms of processing, phosphorylated in an ATR-dependent manner; phosphorylation is required for interaction with H2AX and RAD18 and for DDUP-mediated DNA damage repair.

It localises to the nucleus. The protein localises to the chromosome. In terms of biological role, promotes DNA damage repair through both homologous recombination repair (HRR) and post-replication repair (PRR) mechanisms. Enhances the retention of DNA damage response protein RAD18 at sites of DNA damage. This allows for HRR via association of RAD18 with RAD51C and for PRR via RAD18-mediated promotion of PCNA monoubiquitination. This Homo sapiens (Human) protein is DNA damage up-regulated protein.